The following is a 226-amino-acid chain: Deoxyribose-phosphate aldolase (226 aa).

D84 acts as the Proton donor/acceptor in catalysis. The active-site Schiff-base intermediate with acetaldehyde is the K146. The active-site Proton donor/acceptor is K188.

Belongs to the DeoC/FbaB aldolase family. DeoC type 1 subfamily. In terms of assembly, homodimer.

The protein resides in the cytoplasm. It carries out the reaction 2-deoxy-D-ribose 5-phosphate = D-glyceraldehyde 3-phosphate + acetaldehyde. The protein operates within carbohydrate degradation; 2-deoxy-D-ribose 1-phosphate degradation; D-glyceraldehyde 3-phosphate and acetaldehyde from 2-deoxy-alpha-D-ribose 1-phosphate: step 2/2. Catalyzes a reversible aldol reaction between acetaldehyde and D-glyceraldehyde 3-phosphate to generate 2-deoxy-D-ribose 5-phosphate. The protein is Deoxyribose-phosphate aldolase of Pyrobaculum aerophilum (strain ATCC 51768 / DSM 7523 / JCM 9630 / CIP 104966 / NBRC 100827 / IM2).